Consider the following 54-residue polypeptide: Ovomucoid (54 aa).

In terms of domain architecture, Kazal-like spans 4–54 (VNCSDYPKPVCSLLYMPLCGSDNKTYGNKCNFCNAVADSNGTLTLSHFGKC). 3 cysteine pairs are disulfide-bonded: cysteine 6–cysteine 36, cysteine 14–cysteine 33, and cysteine 22–cysteine 54. Asparagine 43 carries N-linked (GlcNAc...) asparagine glycosylation.

It is found in the secreted. This Geococcyx californianus (Greater roadrunner) protein is Ovomucoid.